The primary structure comprises 253 residues: 5'-nucleotidase SurE (253 aa).

Positions 8, 9, 40, and 97 each coordinate a divalent metal cation.

It belongs to the SurE nucleotidase family. A divalent metal cation serves as cofactor.

It localises to the cytoplasm. It carries out the reaction a ribonucleoside 5'-phosphate + H2O = a ribonucleoside + phosphate. Its function is as follows. Nucleotidase that shows phosphatase activity on nucleoside 5'-monophosphates. The chain is 5'-nucleotidase SurE from Desulforamulus reducens (strain ATCC BAA-1160 / DSM 100696 / MI-1) (Desulfotomaculum reducens).